We begin with the raw amino-acid sequence, 90 residues long: Mitochondrial import inner membrane translocase subunit Tim10 (90 aa).

The short motif at 29 to 54 (CHRKCVPPHYKEAELSKGESVCLDRC) is the Twin CX3C motif element. 2 disulfides stabilise this stretch: Cys-29–Cys-54 and Cys-33–Cys-50.

Belongs to the small Tim family. As to quaternary structure, heterohexamer; composed of 3 copies of TIMM9 and 3 copies of TIMM10/TIM10A, named soluble 70 kDa complex. The complex forms a 6-bladed alpha-propeller structure and associates with the TIMM22 component of the TIM22 complex. Interacts with multi-pass transmembrane proteins in transit. Also forms a complex composed of TIMM9, TIMM10/TIM10A and FXC1/TIM10B.

The protein localises to the mitochondrion inner membrane. In terms of biological role, mitochondrial intermembrane chaperone that participates in the import and insertion of multi-pass transmembrane proteins into the mitochondrial inner membrane. May also be required for the transfer of beta-barrel precursors from the TOM complex to the sorting and assembly machinery (SAM complex) of the outer membrane. Acts as a chaperone-like protein that protects the hydrophobic precursors from aggregation and guide them through the mitochondrial intermembrane space. The chain is Mitochondrial import inner membrane translocase subunit Tim10 (Timm10) from Rattus norvegicus (Rat).